Here is a 100-residue protein sequence, read N- to C-terminus: Large ribosomal subunit protein bL21 (100 aa).

It belongs to the bacterial ribosomal protein bL21 family. In terms of assembly, part of the 50S ribosomal subunit. Contacts protein L20.

Functionally, this protein binds to 23S rRNA in the presence of protein L20. This is Large ribosomal subunit protein bL21 from Mycoplasmoides gallisepticum (strain R(low / passage 15 / clone 2)) (Mycoplasma gallisepticum).